Consider the following 270-residue polypeptide: tRNA (guanine-N(1)-)-methyltransferase (270 aa).

S-adenosyl-L-methionine-binding positions include glycine 117 and 137–142 (IGDYVL).

It belongs to the RNA methyltransferase TrmD family. As to quaternary structure, homodimer.

It localises to the cytoplasm. The enzyme catalyses guanosine(37) in tRNA + S-adenosyl-L-methionine = N(1)-methylguanosine(37) in tRNA + S-adenosyl-L-homocysteine + H(+). Functionally, specifically methylates guanosine-37 in various tRNAs. The chain is tRNA (guanine-N(1)-)-methyltransferase from Heliobacterium modesticaldum (strain ATCC 51547 / Ice1).